The sequence spans 334 residues: B3 domain-containing protein LOC_Os12g40090 (334 aa).

The segment at residues 5–102 (RIRFFRLMTG…SFDVLIFDAS (98 aa)) is a DNA-binding region (TF-B3 1). The interval 142 to 178 (TSTPSVLIGSPHKASTSKKLSGKTKTNPRKEPEDPNC) is disordered. Residues 154–166 (KASTSKKLSGKTK) show a composition bias toward low complexity. The segment at residues 227–326 (FVVVLQTAHV…TMTVHVIGKA (100 aa)) is a DNA-binding region (TF-B3 2).

The protein resides in the nucleus. This is B3 domain-containing protein LOC_Os12g40090 from Oryza sativa subsp. japonica (Rice).